We begin with the raw amino-acid sequence, 225 residues long: NAD(P)H-quinone oxidoreductase subunit K, chloroplastic (225 aa).

[4Fe-4S] cluster contacts are provided by C43, C44, C108, and C139.

This sequence belongs to the complex I 20 kDa subunit family. As to quaternary structure, NDH is composed of at least 16 different subunits, 5 of which are encoded in the nucleus. [4Fe-4S] cluster serves as cofactor.

The protein localises to the plastid. Its subcellular location is the chloroplast thylakoid membrane. It catalyses the reaction a plastoquinone + NADH + (n+1) H(+)(in) = a plastoquinol + NAD(+) + n H(+)(out). The enzyme catalyses a plastoquinone + NADPH + (n+1) H(+)(in) = a plastoquinol + NADP(+) + n H(+)(out). Its function is as follows. NDH shuttles electrons from NAD(P)H:plastoquinone, via FMN and iron-sulfur (Fe-S) centers, to quinones in the photosynthetic chain and possibly in a chloroplast respiratory chain. The immediate electron acceptor for the enzyme in this species is believed to be plastoquinone. Couples the redox reaction to proton translocation, and thus conserves the redox energy in a proton gradient. In Helianthus annuus (Common sunflower), this protein is NAD(P)H-quinone oxidoreductase subunit K, chloroplastic.